We begin with the raw amino-acid sequence, 324 residues long: Short chain dehydrogenase/reductase dmxR8 (324 aa).

NADP(+) is bound by residues leucine 33, lysine 58, aspartate 83, and asparagine 110. The Proton donor role is filled by serine 163. NADP(+)-binding residues include tyrosine 200 and lysine 204. The Proton acceptor role is filled by tyrosine 200. Residue lysine 204 is the Lowers pKa of active site Tyr of the active site.

The protein belongs to the short-chain dehydrogenases/reductases (SDR) family.

It participates in secondary metabolite biosynthesis. Short chain dehydrogenase; part of the gene cluster that mediates the biosynthesis of the dimeric xanthones cryptosporioptides. The pathway begins with the synthesis of atrochrysone thioester by the polyketide synthase dmx-nrPKS. The atrochrysone carboxyl ACP thioesterase dmxR1 then breaks the thioester bond and releases the atrochrysone carboxylic acid from dmx-nrPKS. Atrochrysone carboxylic acid is decarboxylated by the decarboxylase dmxR15, and oxidized by the anthrone oxygenase dmxR16 to yield emodin. Emodin is then reduced to emodin hydroquinone by the oxidoreductase dmxR7. A-ring reduction by the short chain dehydrogenase dmxR18, dehydration by the scytalone dehydratase-like protein dmxR17 and probable spontaneous re-oxidation, results in overall deoxygenation to chrysophanol. Baeyer-Villiger oxidation by the Baeyer-Villiger monooxygenase (BVMO) dmxR6 then yields monodictylactone in equilibrium with monodictyphenone. In the case of the cryptosporioptides biosynthesis, monodictylactone is reduced at C-12 to an alcohol (by the short chain dehydrogenases dmxR12 or dmxR8) and hydroxylated at C-5 by dmxR9, yielding the electron-rich aromatic which could eliminate H(2)O to form the ortho-quinonemethide, followed by tautomerisation to paraquinone and complete the formal reduction to produce the 10-methylgroup. Conjugate addition of C-4a-OH to the resulting paraquinone by the monooxygenase dmxR10 then gives cyclohexadienone, which is then reduced at C-5 by the short chain dehydrogenase dmxR3 to give the dihydroxanthone. The 6,7-epoxide in the cryptosporioptides could be introduced by the cytochrome P450 monooxygenase dmxL3. The highly reducing PKS dmxL2 manufactures butyrate, which is further carboxylated by dmxL1 to form ethylmalonate. It is not yet clear whether the carboxylation occurs while the butyrate is attached to the ACP of dmxL2, but this unusual fungal metabolite could then be esterified to O-5 by the O-acetyltransferase dmxR13. Finally, dimerization performed by dmxR5 gives the observed dimers cryptosporioptides A, B and C as the final products of the pathway. The sequence is that of Short chain dehydrogenase/reductase dmxR8 from Cryptosporiopsis sp. (strain 8999).